A 294-amino-acid polypeptide reads, in one-letter code: 4-hydroxy-tetrahydrodipicolinate synthase (294 aa).

Thr45 provides a ligand contact to pyruvate. The active-site Proton donor/acceptor is the Tyr133. Catalysis depends on Lys162, which acts as the Schiff-base intermediate with substrate. Residue Ile204 coordinates pyruvate.

It belongs to the DapA family. As to quaternary structure, homotetramer; dimer of dimers.

It is found in the cytoplasm. It carries out the reaction L-aspartate 4-semialdehyde + pyruvate = (2S,4S)-4-hydroxy-2,3,4,5-tetrahydrodipicolinate + H2O + H(+). It functions in the pathway amino-acid biosynthesis; L-lysine biosynthesis via DAP pathway; (S)-tetrahydrodipicolinate from L-aspartate: step 3/4. Functionally, catalyzes the condensation of (S)-aspartate-beta-semialdehyde [(S)-ASA] and pyruvate to 4-hydroxy-tetrahydrodipicolinate (HTPA). The chain is 4-hydroxy-tetrahydrodipicolinate synthase from Bartonella henselae (strain ATCC 49882 / DSM 28221 / CCUG 30454 / Houston 1) (Rochalimaea henselae).